The primary structure comprises 485 residues: Acyltransferase cm3D (485 aa).

His-169 (proton acceptor) is an active-site residue.

The protein belongs to the plant acyltransferase family. Monomer.

Its pathway is secondary metabolite biosynthesis. In terms of biological role, acyltransferase; part of the gene cluster that mediates the biosynthesis of beauveriolides I and III, cyclodepsipeptides acting as inhibitors of the acyl-CoA:cholesterol acyltransferase. The HR-PKS cm3B initiates the biosynthesis of beauveriolides by iteratively catalyzing the formation of the linear polyketide chain. The ATP-dependent acetyl-CoA ligase cm3D converts the polyketide carboxylic acid to a CoA thioester which id shuttled to the first T domain in the NRPS cm3A by the acetyltransferase cm3C. Cm3A contains 13 domains and assembles the polyketide chain, L-phenylalanine, L-alanine, and D-leucine (or D-allo-isoleucine) to form beauveriolide I (or beauveriolide III). The production of both beauveriolides I and III suggests the substrate adaptability of cm3B, using different amino acids as substrates. The protein is Acyltransferase cm3D of Cordyceps militaris (strain CM01) (Caterpillar fungus).